Consider the following 150-residue polypeptide: Large ribosomal subunit protein bL9 (150 aa).

Belongs to the bacterial ribosomal protein bL9 family.

In terms of biological role, binds to the 23S rRNA. The protein is Large ribosomal subunit protein bL9 of Lactococcus lactis subsp. cremoris (strain SK11).